We begin with the raw amino-acid sequence, 319 residues long: MFRARHLLGIEPLAPPEITTLLDLAETYVDLNRRTVKHSDALAGMTQINMFFENSTRTQSSFELAGKRLGADVMNMAMQTSSVKKGETLIDTALTLNAMHPDLLVVRHPQSGAVDLLAQKVNCAVLNAGDGRHEHPTQALLDALTIRRAKGRLHRLTVAICGDIAHSRVARSNLILLGKMENRLRLVGPATLMPSGARDWGCEIHEDMREGLKGADVVMMLRLQKERMDGGFIPSEREYYHRWGLDAEKLALAAPDAIVMHPGPMNRGVEIDGTIADDINRSVIQDQVEMGVAVRMAAMDLLARNLRAERGAKAAEMMA.

Arg-57 and Thr-58 together coordinate carbamoyl phosphate. L-aspartate is bound at residue Lys-85. Residues Arg-107, His-135, and Gln-138 each contribute to the carbamoyl phosphate site. The L-aspartate site is built by Arg-168 and Arg-222. Carbamoyl phosphate contacts are provided by Gly-263 and Pro-264.

This sequence belongs to the aspartate/ornithine carbamoyltransferase superfamily. ATCase family. As to quaternary structure, heterododecamer (2C3:3R2) of six catalytic PyrB chains organized as two trimers (C3), and six regulatory PyrI chains organized as three dimers (R2).

It catalyses the reaction carbamoyl phosphate + L-aspartate = N-carbamoyl-L-aspartate + phosphate + H(+). Its pathway is pyrimidine metabolism; UMP biosynthesis via de novo pathway; (S)-dihydroorotate from bicarbonate: step 2/3. Its function is as follows. Catalyzes the condensation of carbamoyl phosphate and aspartate to form carbamoyl aspartate and inorganic phosphate, the committed step in the de novo pyrimidine nucleotide biosynthesis pathway. This Paracoccus denitrificans (strain Pd 1222) protein is Aspartate carbamoyltransferase catalytic subunit.